The primary structure comprises 101 residues: Chaperone modulatory protein CbpM (101 aa).

This sequence belongs to the CbpM family.

Its function is as follows. Interacts with CbpA and inhibits both the DnaJ-like co-chaperone activity and the DNA binding activity of CbpA. Together with CbpA, modulates the activity of the DnaK chaperone system. Does not inhibit the co-chaperone activity of DnaJ. This is Chaperone modulatory protein CbpM from Pseudomonas putida (strain W619).